The chain runs to 31 residues: Conotoxin Cltx-2 (31 aa).

4-hydroxyproline is present on residues proline 6 and proline 31.

Post-translationally, contains 4 disulfide bonds. In terms of tissue distribution, expressed by the venom duct.

The protein resides in the secreted. This is Conotoxin Cltx-2 from Californiconus californicus (California cone).